Consider the following 288-residue polypeptide: Syntaxin-1A (288 aa).

Over residues 1-13 (MKDRTQELRTAKD) the composition is skewed to basic and acidic residues. The disordered stretch occupies residues 1–20 (MKDRTQELRTAKDSDDDDDV). The Cytoplasmic segment spans residues 1-265 (MKDRTQELRT…KYQSKARRKK (265 aa)). Phosphoserine occurs at positions 14, 64, and 95. The stretch at 68-109 (DEKTKEELEELMSDIKKTANKVRSKLKSIEQSIEQEEGLNRS) forms a coiled coil. Ser188 is modified (phosphoserine; by DAPK1). The 63-residue stretch at 192–254 (LSEIETRHSE…ERAVSDTKKA (63 aa)) folds into the t-SNARE coiled-coil homology domain. Residues Lys252, Lys253, and Lys256 each participate in a glycyl lysine isopeptide (Lys-Gly) (interchain with G-Cter in SUMO) cross-link. A helical; Anchor for type IV membrane protein membrane pass occupies residues 266 to 288 (IMIIICCVILGIIIASTIGGIFG).

This sequence belongs to the syntaxin family. As to quaternary structure, part of the SNARE core complex containing SNAP25, VAMP2 and STX1A; this complex constitutes the basic catalytic machinery of the complex neurotransmitter release apparatus. The SNARE complex interacts with CPLX1. Interacts with STXBP1. The interaction with STXBP1 promotes assembly of the SNARE complex. Interacts (via C-terminus) with KCNB1 (via C-terminus); the interaction increases in a calcium-dependent manner and induces a pore-independent enhancement of exocytosis in neuroendocrine cells, chromaffin cells, pancreatic beta cells and from the soma of dorsal root ganglia (DRG) neurons. Interacts with SYTL4. Interacts with STXBP6. Interacts with PLCL1 (via C2 domain). Interacts with OTOF. Interacts with LGI3. Interacts (via the H3 domain) with SLC6A4 (via the N-terminus); this interaction regulates SLC4A6 channel conductance in thalamocortical neurons. Interacts with SYT6 and SYT8; the interaction is Ca(2+)-dependent. Interacts with VAMP8. Interacts with SNAP23. Interacts with VAPA and SYBU. Interacts with PRRT2. Interacts with SEPT8. Interacts with STXBP5L. Interacts with synaptotagmin-1/SYT1. Interacts with SEPTIN5; in the cerebellar cortex. Interacts with SEPTIN4; in the striatum. Phosphorylated by CK2. Phosphorylation at Ser-188 by DAPK1 significantly decreases its interaction with STXBP1. In terms of processing, (Microbial infection) Targeted and hydrolyzed by C.botulinum neurotoxin type C (BoNT/C), which hydrolyzes the 253-Lys-|-Ala-254 bond. Cleavage inhibits neurotransmitter release. Post-translationally, phosphorylated by CK2. Phosphorylation at Ser-188 by DAPK1 significantly decreases its interaction with STXBP1. Sumoylated, sumoylation is required for regulation of synaptic vesicle endocytosis. Expressed predominantly in cerebral cortex, hippocampus, cerebellum, adrenal medulla and retina with weak expression detected in non-neuronal tissues.

Its subcellular location is the cytoplasmic vesicle. It localises to the secretory vesicle. The protein resides in the synaptic vesicle membrane. The protein localises to the cell membrane. It is found in the synapse. Its subcellular location is the synaptosome. Functionally, plays an essential role in hormone and neurotransmitter calcium-dependent exocytosis and endocytosis. Part of the SNARE (Soluble NSF Attachment Receptor) complex composed of SNAP25, STX1A and VAMP2 which mediates the fusion of synaptic vesicles with the presynaptic plasma membrane. STX1A and SNAP25 are localized on the plasma membrane while VAMP2 resides in synaptic vesicles. The pairing of the three SNAREs from the N-terminal SNARE motifs to the C-terminal anchors leads to the formation of the SNARE complex, which brings membranes into close proximity and results in final fusion. Participates in the calcium-dependent regulation of acrosomal exocytosis in sperm. Also plays an important role in the exocytosis of hormones such as insulin or glucagon-like peptide 1 (GLP-1). The sequence is that of Syntaxin-1A (Stx1a) from Rattus norvegicus (Rat).